The following is a 165-amino-acid chain: Glycine cleavage system H protein, mitochondrial (165 aa).

Residues 57 to 139 (NAIVGISSYA…YEKGWLFKVD (83 aa)) form the Lipoyl-binding domain. The residue at position 98 (Lys98) is an N6-lipoyllysine.

Belongs to the GcvH family. In terms of assembly, the glycine cleavage system is composed of four proteins: P, T, L and H. (R)-lipoate is required as a cofactor.

It is found in the mitochondrion. In terms of biological role, the glycine cleavage system catalyzes the degradation of glycine. The H protein shuttles the methylamine group of glycine from the P protein to the T protein. The protein is Glycine cleavage system H protein, mitochondrial (ppl) of Drosophila melanogaster (Fruit fly).